The sequence spans 122 residues: MRHRNGNRKLNRTSSHRAAMLRNMANSLLTHEAIVTTLPKAKELRRVVEPLITLGKKPSLANRRLAFDRTRDRDVVVKLFGDLGPRFTARNGGYVRVLKYGFRKGDNAPLALVELVDKPAAE.

Belongs to the bacterial ribosomal protein bL17 family. In terms of assembly, part of the 50S ribosomal subunit. Contacts protein L32.

This Neisseria meningitidis serogroup B (strain ATCC BAA-335 / MC58) protein is Large ribosomal subunit protein bL17.